Reading from the N-terminus, the 264-residue chain is S-adenosylmethionine decarboxylase proenzyme (264 aa).

Residue Ser113 is the Schiff-base intermediate with substrate; via pyruvic acid of the active site. Ser113 is subject to Pyruvic acid (Ser); by autocatalysis. His118 (proton acceptor; for processing activity) is an active-site residue. Cys141 acts as the Proton donor; for catalytic activity in catalysis.

This sequence belongs to the prokaryotic AdoMetDC family. Type 2 subfamily. As to quaternary structure, heterooctamer of four alpha and four beta chains arranged as a tetramer of alpha/beta heterodimers. Pyruvate serves as cofactor. In terms of processing, is synthesized initially as an inactive proenzyme. Formation of the active enzyme involves a self-maturation process in which the active site pyruvoyl group is generated from an internal serine residue via an autocatalytic post-translational modification. Two non-identical subunits are generated from the proenzyme in this reaction, and the pyruvate is formed at the N-terminus of the alpha chain, which is derived from the carboxyl end of the proenzyme. The post-translation cleavage follows an unusual pathway, termed non-hydrolytic serinolysis, in which the side chain hydroxyl group of the serine supplies its oxygen atom to form the C-terminus of the beta chain, while the remainder of the serine residue undergoes an oxidative deamination to produce ammonia and the pyruvoyl group blocking the N-terminus of the alpha chain.

The catalysed reaction is S-adenosyl-L-methionine + H(+) = S-adenosyl 3-(methylsulfanyl)propylamine + CO2. Its pathway is amine and polyamine biosynthesis; S-adenosylmethioninamine biosynthesis; S-adenosylmethioninamine from S-adenosyl-L-methionine: step 1/1. In terms of biological role, catalyzes the decarboxylation of S-adenosylmethionine to S-adenosylmethioninamine (dcAdoMet), the propylamine donor required for the synthesis of the polyamines spermine and spermidine from the diamine putrescine. The protein is S-adenosylmethionine decarboxylase proenzyme of Xanthomonas oryzae pv. oryzae (strain MAFF 311018).